A 591-amino-acid polypeptide reads, in one-letter code: Alternative cytochrome c oxidase subunit 1 (591 aa).

Residues 40–60 (VIAIQYSLTASAIGLVALVLS) form a helical membrane-spanning segment. H88 provides a ligand contact to heme b. 11 helical membrane-spanning segments follow: residues 90-110 (MIMVIYLLTALFLGGFGNYLI), 126-146 (MLSYWVYLLAVLVLASAFFVP), 172-192 (GIVLMLSSLILFIIGFTMGGL), 215-235 (VWGIFTATVMALLAFPALFVG), 274-294 (LFWFFGHPEVYIVALPAFGIV), 313-333 (VWAIVAIGALSFVVWAHHMYV), 337-357 (YPYFGFFFATTTLIIAIPTAI), 377-397 (MLFALGFIITFVNGGLTGLFL), 412-432 (VVAHFHMVMGVAPIMVVLGAI), 453-473 (FWVTFLGAYLIFFPMHYLGLL), and 498-518 (FITVVALTVGFAQMVFLFNLV). H280, Y284, H329, and H330 together coordinate Cu cation. The 1'-histidyl-3'-tyrosine (His-Tyr) cross-link spans 280–284 (HPEVY). Heme b-binding residues include H415 and H417.

The protein belongs to the heme-copper respiratory oxidase family. In terms of assembly, this alternate cytochrome c oxidase consists of a subunit I and two cytochromes c. Equivalents to subunit 2 and 3 are not present in this complex.

The protein resides in the cell membrane. It carries out the reaction 4 Fe(II)-[cytochrome c] + O2 + 8 H(+)(in) = 4 Fe(III)-[cytochrome c] + 2 H2O + 4 H(+)(out). In terms of biological role, cytochrome c oxidase is the component of the respiratory chain that catalyzes the reduction of oxygen to water. Subunits 1-3 form the functional core of the enzyme complex. Co I is the catalytic subunit of the enzyme. Electrons originating in cytochrome c are transferred via the copper A center of subunit 2 and a low-spin heme of subunit 1 to the bimetallic center formed by a high-spin heme and copper B. The polypeptide is Alternative cytochrome c oxidase subunit 1 (coxN) (Bradyrhizobium diazoefficiens (strain JCM 10833 / BCRC 13528 / IAM 13628 / NBRC 14792 / USDA 110)).